The sequence spans 641 residues: Chaperone protein DnaK (641 aa).

Thr199 is modified (phosphothreonine; by autocatalysis). Residues 577–590 (KGDNKDEIETRTQK) are compositionally biased toward basic and acidic residues. The tract at residues 577–641 (KGDNKDEIET…EFEEVDDKKK (65 aa)) is disordered. The span at 617-626 (GAEQASAQQD) shows a compositional bias: low complexity. The segment covering 627–641 (DVVDAEFEEVDDKKK) has biased composition (acidic residues).

The protein belongs to the heat shock protein 70 family.

Acts as a chaperone. The sequence is that of Chaperone protein DnaK from Thioalkalivibrio sulfidiphilus (strain HL-EbGR7).